A 340-amino-acid chain; its full sequence is Anthranilate phosphoribosyltransferase (340 aa).

5-phospho-alpha-D-ribose 1-diphosphate is bound by residues Gly83, 86–87, Thr91, 93–96, 111–119, and Ser123; these read GD, NIST, and KHGNRSITS. Gly83 is an anthranilate binding site. Position 95 (Ser95) interacts with Mg(2+). Asn114 contributes to the anthranilate binding site. Residue Arg169 coordinates anthranilate. Residues Asp228 and Glu229 each contribute to the Mg(2+) site.

Belongs to the anthranilate phosphoribosyltransferase family. Homodimer. It depends on Mg(2+) as a cofactor.

It carries out the reaction N-(5-phospho-beta-D-ribosyl)anthranilate + diphosphate = 5-phospho-alpha-D-ribose 1-diphosphate + anthranilate. Its pathway is amino-acid biosynthesis; L-tryptophan biosynthesis; L-tryptophan from chorismate: step 2/5. In terms of biological role, catalyzes the transfer of the phosphoribosyl group of 5-phosphorylribose-1-pyrophosphate (PRPP) to anthranilate to yield N-(5'-phosphoribosyl)-anthranilate (PRA). In Solibacter usitatus (strain Ellin6076), this protein is Anthranilate phosphoribosyltransferase.